The primary structure comprises 735 residues: Phosphoribosylformylglycinamidine synthase subunit PurL (735 aa).

His48 is an active-site residue. Residues Tyr51 and Lys90 each contribute to the ATP site. Residue Glu92 coordinates Mg(2+). Residues 93–96 (SHNH) and Arg115 contribute to the substrate site. His94 (proton acceptor) is an active-site residue. Mg(2+) is bound at residue Asp116. Gln239 contributes to the substrate binding site. Residue Asp267 participates in Mg(2+) binding. Position 311-313 (311-313 (ESQ)) interacts with substrate. The ATP site is built by Asp492 and Gly529. Asn530 lines the Mg(2+) pocket. Ser532 is a substrate binding site.

The protein belongs to the FGAMS family. As to quaternary structure, monomer. Part of the FGAM synthase complex composed of 1 PurL, 1 PurQ and 2 PurS subunits.

The protein localises to the cytoplasm. The enzyme catalyses N(2)-formyl-N(1)-(5-phospho-beta-D-ribosyl)glycinamide + L-glutamine + ATP + H2O = 2-formamido-N(1)-(5-O-phospho-beta-D-ribosyl)acetamidine + L-glutamate + ADP + phosphate + H(+). It participates in purine metabolism; IMP biosynthesis via de novo pathway; 5-amino-1-(5-phospho-D-ribosyl)imidazole from N(2)-formyl-N(1)-(5-phospho-D-ribosyl)glycinamide: step 1/2. In terms of biological role, part of the phosphoribosylformylglycinamidine synthase complex involved in the purines biosynthetic pathway. Catalyzes the ATP-dependent conversion of formylglycinamide ribonucleotide (FGAR) and glutamine to yield formylglycinamidine ribonucleotide (FGAM) and glutamate. The FGAM synthase complex is composed of three subunits. PurQ produces an ammonia molecule by converting glutamine to glutamate. PurL transfers the ammonia molecule to FGAR to form FGAM in an ATP-dependent manner. PurS interacts with PurQ and PurL and is thought to assist in the transfer of the ammonia molecule from PurQ to PurL. The sequence is that of Phosphoribosylformylglycinamidine synthase subunit PurL from Bradyrhizobium sp. (strain BTAi1 / ATCC BAA-1182).